The chain runs to 103 residues: Large ribosomal subunit protein uL24 (103 aa).

The protein belongs to the universal ribosomal protein uL24 family. In terms of assembly, part of the 50S ribosomal subunit.

Its function is as follows. One of two assembly initiator proteins, it binds directly to the 5'-end of the 23S rRNA, where it nucleates assembly of the 50S subunit. In terms of biological role, one of the proteins that surrounds the polypeptide exit tunnel on the outside of the subunit. This chain is Large ribosomal subunit protein uL24, found in Agathobacter rectalis (strain ATCC 33656 / DSM 3377 / JCM 17463 / KCTC 5835 / VPI 0990) (Eubacterium rectale).